A 91-amino-acid chain; its full sequence is Small ribosomal subunit protein uS15c (91 aa).

It belongs to the universal ribosomal protein uS15 family. As to quaternary structure, part of the 30S ribosomal subunit.

The protein localises to the plastid. The protein resides in the chloroplast. The sequence is that of Small ribosomal subunit protein uS15c (rps15) from Eucalyptus globulus subsp. globulus (Tasmanian blue gum).